The sequence spans 144 residues: Large ribosomal subunit protein uL15 (144 aa).

The interval 1 to 53 is disordered; the sequence is MRLNTLSPAEGAKHSAKRLGRGIGSGLGKTGGRGHKGQKSRTGGGVRRGFEGG. Positions 21 to 31 are enriched in gly residues; sequence RGIGSGLGKTG.

Belongs to the universal ribosomal protein uL15 family. As to quaternary structure, part of the 50S ribosomal subunit.

Functionally, binds to the 23S rRNA. The polypeptide is Large ribosomal subunit protein uL15 (Pasteurella multocida (strain Pm70)).